A 91-amino-acid polypeptide reads, in one-letter code: C-C motif chemokine 5 (91 aa).

The first 23 residues, 1-23, serve as a signal peptide directing secretion; it reads MKVFAAALAVILATATFCTPASA. Intrachain disulfides connect Cys33–Cys57 and Cys34–Cys73.

It belongs to the intercrine beta (chemokine CC) family.

It is found in the secreted. Chemoattractant for blood monocytes, memory T-helper cells and eosinophils. Causes the release of histamine from basophils and activates eosinophils. May activate several chemokine receptors including CCR1, CCR3, CCR4 and CCR5. May also be an agonist of the G protein-coupled receptor GPR75. Together with GPR75, may play a role in neuron survival through activation of a downstream signaling pathway involving the PI3, Akt and MAP kinases. By activating GPR75 may also play a role in insulin secretion by islet cells. This is C-C motif chemokine 5 (CCL5) from Equus caballus (Horse).